We begin with the raw amino-acid sequence, 148 residues long: Deoxyuridine 5'-triphosphate nucleotidohydrolase (148 aa).

Residues arginine 68–glycine 70, asparagine 81, threonine 85–aspartate 87, and lysine 95 each bind substrate.

The protein belongs to the dUTPase family. It depends on Mg(2+) as a cofactor.

It catalyses the reaction dUTP + H2O = dUMP + diphosphate + H(+). It functions in the pathway pyrimidine metabolism; dUMP biosynthesis; dUMP from dCTP (dUTP route): step 2/2. Its function is as follows. This enzyme is involved in nucleotide metabolism: it produces dUMP, the immediate precursor of thymidine nucleotides and it decreases the intracellular concentration of dUTP so that uracil cannot be incorporated into DNA. This chain is Deoxyuridine 5'-triphosphate nucleotidohydrolase, found in Rickettsia akari (strain Hartford).